The chain runs to 337 residues: Putative 4-hydroxythreonine-4-phosphate dehydrogenase 2 (337 aa).

Residues H173, H217, and H274 each coordinate a divalent metal cation.

This sequence belongs to the PdxA family. Homodimer. The cofactor is Zn(2+). It depends on Mg(2+) as a cofactor. Requires Co(2+) as cofactor.

It localises to the cytoplasm. It carries out the reaction 4-(phosphooxy)-L-threonine + NAD(+) = 3-amino-2-oxopropyl phosphate + CO2 + NADH. It functions in the pathway cofactor biosynthesis; pyridoxine 5'-phosphate biosynthesis; pyridoxine 5'-phosphate from D-erythrose 4-phosphate: step 4/5. In terms of biological role, catalyzes the NAD(P)-dependent oxidation of 4-(phosphooxy)-L-threonine (HTP) into 2-amino-3-oxo-4-(phosphooxy)butyric acid which spontaneously decarboxylates to form 3-amino-2-oxopropyl phosphate (AHAP). This chain is Putative 4-hydroxythreonine-4-phosphate dehydrogenase 2, found in Pseudomonas aeruginosa (strain ATCC 15692 / DSM 22644 / CIP 104116 / JCM 14847 / LMG 12228 / 1C / PRS 101 / PAO1).